The following is a 332-amino-acid chain: tRNA-dihydrouridine(20/20a) synthase (332 aa).

Residues 19-21 (PML) and Q71 each bind FMN. Catalysis depends on C101, which acts as the Proton donor. FMN-binding positions include K140, H173, 213–215 (NGG), and 235–236 (GR).

The protein belongs to the Dus family. DusA subfamily. It depends on FMN as a cofactor.

The enzyme catalyses 5,6-dihydrouridine(20) in tRNA + NADP(+) = uridine(20) in tRNA + NADPH + H(+). It carries out the reaction 5,6-dihydrouridine(20) in tRNA + NAD(+) = uridine(20) in tRNA + NADH + H(+). The catalysed reaction is 5,6-dihydrouridine(20a) in tRNA + NADP(+) = uridine(20a) in tRNA + NADPH + H(+). It catalyses the reaction 5,6-dihydrouridine(20a) in tRNA + NAD(+) = uridine(20a) in tRNA + NADH + H(+). In terms of biological role, catalyzes the synthesis of 5,6-dihydrouridine (D), a modified base found in the D-loop of most tRNAs, via the reduction of the C5-C6 double bond in target uridines. Specifically modifies U20 and U20a in tRNAs. This Salmonella typhi protein is tRNA-dihydrouridine(20/20a) synthase.